A 1400-amino-acid chain; its full sequence is DNA-directed RNA polymerase subunit beta' (1400 aa).

Residues C70, C72, C85, and C88 each coordinate Zn(2+). The Mg(2+) site is built by D460, D462, and D464. Zn(2+) contacts are provided by C814, C889, C896, and C899.

Belongs to the RNA polymerase beta' chain family. In terms of assembly, the RNAP catalytic core consists of 2 alpha, 1 beta, 1 beta' and 1 omega subunit. When a sigma factor is associated with the core the holoenzyme is formed, which can initiate transcription. Requires Mg(2+) as cofactor. It depends on Zn(2+) as a cofactor.

The enzyme catalyses RNA(n) + a ribonucleoside 5'-triphosphate = RNA(n+1) + diphosphate. DNA-dependent RNA polymerase catalyzes the transcription of DNA into RNA using the four ribonucleoside triphosphates as substrates. The polypeptide is DNA-directed RNA polymerase subunit beta' (Alcanivorax borkumensis (strain ATCC 700651 / DSM 11573 / NCIMB 13689 / SK2)).